The chain runs to 314 residues: Deoxymugineic acid synthase 1-D (314 aa).

Residues 1–21 (MGAGEKTAAGMPRIGMGTAVQ) form a disordered region. Residue D44 coordinates NADP(+). Y49 (proton donor) is an active-site residue. H112 lines the substrate pocket. NADP(+) is bound by residues 158 to 159 (AN), Q180, 258 to 266 (FDEARMREN), and 273 to 281 (ELTEEERLR).

It belongs to the aldo/keto reductase family. In terms of tissue distribution, mostly expressed in root tissues, observed, at low levels, in mesocotyl and embryonic roots, seedling roots, crown and seedling leafes, mature bracts, anthers, pistil, caryopsis and embryos.

It catalyses the reaction 2'-deoxymugineate + NAD(+) = 3''-deamino-3''-oxonicotianamine + NADH + H(+). The enzyme catalyses 2'-deoxymugineate + NADP(+) = 3''-deamino-3''-oxonicotianamine + NADPH + H(+). It functions in the pathway siderophore biosynthesis. Functionally, catalyzes the reduction of a 3''-keto intermediate during the biosynthesis of 2'-deoxymugineic acid (DMA) from L-Met. Involved in the formation of phytosiderophores (MAs) belonging to the mugineic acid family and required to acquire iron. This chain is Deoxymugineic acid synthase 1-D, found in Triticum aestivum (Wheat).